The sequence spans 142 residues: MLSPKKTKYRKQFKGRIHGTAKGGFTLNFGSYGLKSMEPERITARQIEAARRAITRQMKRQGRVWIRVFPDVPVTGKPAEVRMGSGKGSVEYWAARVHPGRIMFEIDGVPDDVAREALRLGAAKLPVKTRIVTRIDAAVEHA.

Belongs to the universal ribosomal protein uL16 family. In terms of assembly, part of the 50S ribosomal subunit.

Functionally, binds 23S rRNA and is also seen to make contacts with the A and possibly P site tRNAs. The chain is Large ribosomal subunit protein uL16 from Phenylobacterium zucineum (strain HLK1).